Reading from the N-terminus, the 1723-residue chain is Homeobox protein 5 (1723 aa).

Positions 36–50 are enriched in low complexity; sequence QLQQPQHQPQHYQQQ. 9 disordered regions span residues 36 to 425, 440 to 522, 543 to 756, 878 to 978, 1080 to 1214, 1226 to 1264, 1345 to 1399, 1456 to 1498, and 1513 to 1547; these read QLQQ…APGT, SSSP…QLQQ, ENIT…PPLT, GTIV…TGSL, IFNN…SENN, VSLGSLPTNTPSSMEIEQQQQQQQQQQQQQQQQHLNQQQ, IVNN…TQTS, QQQQ…STTT, and HNQQVSPISPRSPRSPHGTSGDYNDGSQSPSSRRK. The span at 51–72 shows a compositional bias: polar residues; sequence DSFVSPNLDNNNPQIHVQSNNY. 2 stretches are compositionally biased toward low complexity: residues 73–107 and 114–212; these read NQNGFVGYNNSNNNNNNNQHMNNQYSNSFHNNNSS and NNSS…NNNN. Composition is skewed to polar residues over residues 223 to 237 and 244 to 257; these read SQPTSPYNNPIQHNP and GQHNPFNGNQMVMD. 2 stretches are compositionally biased toward low complexity: residues 258-284 and 291-350; these read NNNNNNNNNNSNVFNSNSNSNVFNSNS and NNNN…NNNN. The stretch at 300-351 forms a coiled coil; that stretch reads YNNNNNNNNNNNSNSNNNNNNNNNNNNNNNNNNNNNNNNNNNNNSNNNNNNQ. A compositionally biased stretch (polar residues) spans 351–369; that stretch reads QFSQSYDSTLGNNRFSSMM. 2 stretches are compositionally biased toward low complexity: residues 371–421 and 440–465; these read QPIQ…LIGS and SSSPTSSPSSPVKKGKSQSALALSSS. The span at 483–510 shows a compositional bias: polar residues; that stretch reads MSSITNTNLKSTQASTLKESKRSNSSPN. Composition is skewed to low complexity over residues 511 to 522, 544 to 571, and 581 to 593; these read LKKQMQLQQLQQ, NITNNNNNNNNNNNNNNNNNNNNNITNN, and NSNNINQSSDSIN. A compositionally biased stretch (polar residues) spans 632–655; sequence HISTTQQSPSLNGSTGGSMLTPTM. Gly residues predominate over residues 660-669; that stretch reads LSGGGSGGGF. A compositionally biased stretch (polar residues) spans 673 to 685; that stretch reads ISPTGTTSNKDLQ. Composition is skewed to low complexity over residues 686–699, 710–727, and 734–745; these read SSPSPSPLLKSMSM, SMSSPLSPNSSLSSSNGL, and SNNMNSSGGIPT. Residues 746-755 show a composition bias toward pro residues; it reads PSTPTSPPPL. Low complexity predominate over residues 882 to 928; that stretch reads NPTNVNNNNINNNNNNNNNNNNNNNNNNNNNNNNNNNNTTTTTTTTT. The span at 929–945 shows a compositional bias: polar residues; it reads SANTVQSGTTSNSNLVF. 2 stretches are compositionally biased toward low complexity: residues 946 to 977 and 1082 to 1146; these read QQTSNSNTLSPSQQQQQQTQQQQSINGSSTGS and NNNN…SINS. 2 stretches are compositionally biased toward polar residues: residues 1147–1159 and 1176–1187; these read PRPSTPTTLNSSG and DISTGLMASSDQ. Positions 1193–1270 form a coiled coil; it reads QQQQHQQLVN…NQQQILHQQL (78 aa). The span at 1194 to 1214 shows a compositional bias: low complexity; it reads QQQHQQLVNNNNNNMNNSENN. Polar residues predominate over residues 1226-1242; the sequence is VSLGSLPTNTPSSMEIE. 5 stretches are compositionally biased toward low complexity: residues 1243-1264, 1347-1384, 1456-1480, 1487-1498, and 1518-1528; these read QQQQQQQQQQQQQQQQHLNQQQ, NNQNNNNNDQNNNNNNNNNNNSTTNSNVNNNNNTTNTP, QQQQQQQETPHTPTSNSISSPRSSP, SNTNTTTTSTTT, and SPISPRSPRSP. Positions 1431-1464 form a coiled coil; the sequence is VLQQQQQQQQQQQQQQQQQQQQQQQQQQQQQQET. Residues 1529–1543 are compositionally biased toward polar residues; that stretch reads HGTSGDYNDGSQSPS. The homeobox DNA-binding region spans 1543–1607; it reads SSRRKNRFTD…NKRARSRPSP (65 aa). The region spanning 1553–1588 is the EF-hand domain; sequence FQIKRMNDCFENLDKNNNGKFTSEEICQIATELGLT. Disordered stretches follow at residues 1598–1625 and 1661–1723; these read NKRARSRPSPRGQPTNPLTSSTNNGNNS and LHQQ…TINE. The span at 1612–1625 shows a compositional bias: low complexity; the sequence is TNPLTSSTNNGNNS. The stretch at 1632–1702 forms a coiled coil; the sequence is LQQQHLQQVQ…NNNNNNNNNN (71 aa). Polar residues predominate over residues 1665–1675; it reads SANTTPQLNSM. The span at 1676–1723 shows a compositional bias: low complexity; that stretch reads NPNSINYNNNNNNNNNNNNNNNNNNNNNNNNNNNNNNIINNNITTINE.

The protein localises to the nucleus. Its function is as follows. Putative transcription factor. The chain is Homeobox protein 5 (hbx5-1) from Dictyostelium discoideum (Social amoeba).